The sequence spans 486 residues: Protein nucleotidyltransferase YdiU (486 aa).

Residues G90, G92, R93, K113, D125, G126, R176, and R183 each contribute to the ATP site. D252 functions as the Proton acceptor in the catalytic mechanism. Mg(2+) contacts are provided by N253 and D262. D262 is a binding site for ATP.

Belongs to the SELO family. The cofactor is Mg(2+). Mn(2+) serves as cofactor.

It catalyses the reaction L-seryl-[protein] + ATP = 3-O-(5'-adenylyl)-L-seryl-[protein] + diphosphate. The enzyme catalyses L-threonyl-[protein] + ATP = 3-O-(5'-adenylyl)-L-threonyl-[protein] + diphosphate. The catalysed reaction is L-tyrosyl-[protein] + ATP = O-(5'-adenylyl)-L-tyrosyl-[protein] + diphosphate. It carries out the reaction L-histidyl-[protein] + UTP = N(tele)-(5'-uridylyl)-L-histidyl-[protein] + diphosphate. It catalyses the reaction L-seryl-[protein] + UTP = O-(5'-uridylyl)-L-seryl-[protein] + diphosphate. The enzyme catalyses L-tyrosyl-[protein] + UTP = O-(5'-uridylyl)-L-tyrosyl-[protein] + diphosphate. Its function is as follows. Nucleotidyltransferase involved in the post-translational modification of proteins. It can catalyze the addition of adenosine monophosphate (AMP) or uridine monophosphate (UMP) to a protein, resulting in modifications known as AMPylation and UMPylation. The polypeptide is Protein nucleotidyltransferase YdiU (Pseudomonas putida (strain GB-1)).